Consider the following 334-residue polypeptide: Holliday junction branch migration complex subunit RuvB (334 aa).

Positions 4–184 (ADRLIQPQLQ…FGIPLRLEFY (181 aa)) are large ATPase domain (RuvB-L). ATP-binding positions include Arg24, Gly65, Lys68, Thr69, Thr70, 131–133 (EDY), Arg174, Tyr184, and Arg221. Thr69 lines the Mg(2+) pocket. The interval 185-255 (NVKDLSTIVT…VAEQALDLLD (71 aa)) is small ATPAse domain (RuvB-S). The head domain (RuvB-H) stretch occupies residues 258-334 (GEGFDYMDRK…YLHFGMIKPE (77 aa)). DNA-binding residues include Arg294, Arg313, and Arg318.

It belongs to the RuvB family. In terms of assembly, homohexamer. Forms an RuvA(8)-RuvB(12)-Holliday junction (HJ) complex. HJ DNA is sandwiched between 2 RuvA tetramers; dsDNA enters through RuvA and exits via RuvB. An RuvB hexamer assembles on each DNA strand where it exits the tetramer. Each RuvB hexamer is contacted by two RuvA subunits (via domain III) on 2 adjacent RuvB subunits; this complex drives branch migration. In the full resolvosome a probable DNA-RuvA(4)-RuvB(12)-RuvC(2) complex forms which resolves the HJ.

The protein resides in the cytoplasm. The enzyme catalyses ATP + H2O = ADP + phosphate + H(+). The RuvA-RuvB-RuvC complex processes Holliday junction (HJ) DNA during genetic recombination and DNA repair, while the RuvA-RuvB complex plays an important role in the rescue of blocked DNA replication forks via replication fork reversal (RFR). RuvA specifically binds to HJ cruciform DNA, conferring on it an open structure. The RuvB hexamer acts as an ATP-dependent pump, pulling dsDNA into and through the RuvAB complex. RuvB forms 2 homohexamers on either side of HJ DNA bound by 1 or 2 RuvA tetramers; 4 subunits per hexamer contact DNA at a time. Coordinated motions by a converter formed by DNA-disengaged RuvB subunits stimulates ATP hydrolysis and nucleotide exchange. Immobilization of the converter enables RuvB to convert the ATP-contained energy into a lever motion, pulling 2 nucleotides of DNA out of the RuvA tetramer per ATP hydrolyzed, thus driving DNA branch migration. The RuvB motors rotate together with the DNA substrate, which together with the progressing nucleotide cycle form the mechanistic basis for DNA recombination by continuous HJ branch migration. Branch migration allows RuvC to scan DNA until it finds its consensus sequence, where it cleaves and resolves cruciform DNA. The protein is Holliday junction branch migration complex subunit RuvB of Shewanella sp. (strain ANA-3).